We begin with the raw amino-acid sequence, 55 residues long: Metallothionein-1 (55 aa).

This sequence belongs to the metallothionein superfamily. Type 11 family.

In Yarrowia lipolytica (strain CLIB 122 / E 150) (Yeast), this protein is Metallothionein-1 (MTP1).